A 400-amino-acid chain; its full sequence is Probable succinyl-diaminopimelate desuccinylase (400 aa).

His72 is a Zn(2+) binding site. Asp74 is a catalytic residue. Asp105 is a binding site for Zn(2+). Residue Glu139 is the Proton acceptor of the active site. Zn(2+)-binding residues include Glu140, Glu165, and His378.

This sequence belongs to the peptidase M20A family. Requires Zn(2+) as cofactor. Co(2+) is required as a cofactor.

It carries out the reaction N-succinyl-(2S,6S)-2,6-diaminopimelate + H2O = (2S,6S)-2,6-diaminopimelate + succinate. It functions in the pathway amino-acid biosynthesis; L-lysine biosynthesis via DAP pathway; LL-2,6-diaminopimelate from (S)-tetrahydrodipicolinate (succinylase route): step 3/3. In Staphylococcus aureus (strain Mu50 / ATCC 700699), this protein is Probable succinyl-diaminopimelate desuccinylase (dapE).